Consider the following 156-residue polypeptide: Cyanate hydratase (156 aa).

Catalysis depends on residues R96, E99, and S122.

It belongs to the cyanase family.

The enzyme catalyses cyanate + hydrogencarbonate + 3 H(+) = NH4(+) + 2 CO2. In terms of biological role, catalyzes the reaction of cyanate with bicarbonate to produce ammonia and carbon dioxide. This is Cyanate hydratase from Escherichia coli (strain ATCC 8739 / DSM 1576 / NBRC 3972 / NCIMB 8545 / WDCM 00012 / Crooks).